The sequence spans 341 residues: Very-long-chain 3-oxoacyl-CoA reductase (341 aa).

Residues 17 to 37 (ALYGALLLGVYKLTTFALSLV) form a helical membrane-spanning segment. 7 residues coordinate NADP(+): Val63, Asp117, Asn144, Tyr218, Lys222, Val251, and Ser253. The active-site Proton donor is Tyr218. Lys222 serves as the catalytic Lowers pKa of active site Tyr.

This sequence belongs to the short-chain dehydrogenases/reductases (SDR) family.

Its subcellular location is the endoplasmic reticulum membrane. The catalysed reaction is a very-long-chain (3R)-3-hydroxyacyl-CoA + NADP(+) = a very-long-chain 3-oxoacyl-CoA + NADPH + H(+). The protein operates within lipid metabolism; fatty acid biosynthesis. In terms of biological role, component of the microsomal membrane bound fatty acid elongation system, which produces the 26-carbon very long-chain fatty acids (VLCFA) from palmitate. Catalyzes the reduction of the 3-ketoacyl-CoA intermediate that is formed in each cycle of fatty acid elongation. VLCFAs serve as precursors for ceramide and sphingolipids. This chain is Very-long-chain 3-oxoacyl-CoA reductase, found in Meyerozyma guilliermondii (strain ATCC 6260 / CBS 566 / DSM 6381 / JCM 1539 / NBRC 10279 / NRRL Y-324) (Yeast).